The following is a 419-amino-acid chain: Probable 3-isopropylmalate dehydratase large subunit (419 aa).

[4Fe-4S] cluster is bound by residues C299, C359, and C362.

This sequence belongs to the aconitase/IPM isomerase family. LeuC type 2 subfamily. In terms of assembly, heterodimer of LeuC and LeuD. The cofactor is [4Fe-4S] cluster.

The enzyme catalyses (2R,3S)-3-isopropylmalate = (2S)-2-isopropylmalate. It participates in amino-acid biosynthesis; L-leucine biosynthesis; L-leucine from 3-methyl-2-oxobutanoate: step 2/4. In terms of biological role, catalyzes the isomerization between 2-isopropylmalate and 3-isopropylmalate, via the formation of 2-isopropylmaleate. The sequence is that of Probable 3-isopropylmalate dehydratase large subunit from Methanothermobacter thermautotrophicus (strain ATCC 29096 / DSM 1053 / JCM 10044 / NBRC 100330 / Delta H) (Methanobacterium thermoautotrophicum).